Consider the following 276-residue polypeptide: MRESLKNSKRLVIKVGTSTLMYGNGHINLRTIEKLAMVLSDLRNEGKEVILVSSGAIGVGCHKLQLPVRPTSIPDLQAVASVGQSELMHIYSKFFGEYGQVVGQVLLTRDVTDFPISRENVMNTLDSLLSRGIIPIVNENDTVAVEELEHVTKYGDNDLLSAIVAKLVQADLLIMLSDIDGFYGSNPTTDPDAVMFSEINQITPEIEALAGGRGSKFGTGGMLTKLSAASYCMESNQKMILTNGKNPTVIFNIMQGEQVGTLFASKKEELSHDRTH.

ATP is bound at residue K14. S54, D141, and N157 together coordinate substrate. ATP is bound by residues 177–178 and 219–225; these read SD and TGGMLTK.

Belongs to the glutamate 5-kinase family.

It is found in the cytoplasm. The enzyme catalyses L-glutamate + ATP = L-glutamyl 5-phosphate + ADP. It participates in amino-acid biosynthesis; L-proline biosynthesis; L-glutamate 5-semialdehyde from L-glutamate: step 1/2. In terms of biological role, catalyzes the transfer of a phosphate group to glutamate to form L-glutamate 5-phosphate. In Listeria monocytogenes serotype 4a (strain HCC23), this protein is Glutamate 5-kinase.